An 82-amino-acid polypeptide reads, in one-letter code: ATP synthase subunit c, chloroplastic (82 aa).

2 consecutive transmembrane segments (helical) span residues 7-27 (AASV…PGIG) and 57-77 (LAFM…LLFA).

It belongs to the ATPase C chain family. In terms of assembly, F-type ATPases have 2 components, F(1) - the catalytic core - and F(0) - the membrane proton channel. F(1) has five subunits: alpha(3), beta(3), gamma(1), delta(1), epsilon(1). F(0) has four main subunits: a(1), b(1), b'(1) and c(10-14). The alpha and beta chains form an alternating ring which encloses part of the gamma chain. F(1) is attached to F(0) by a central stalk formed by the gamma and epsilon chains, while a peripheral stalk is formed by the delta, b and b' chains.

It localises to the plastid. The protein resides in the chloroplast thylakoid membrane. In terms of biological role, f(1)F(0) ATP synthase produces ATP from ADP in the presence of a proton or sodium gradient. F-type ATPases consist of two structural domains, F(1) containing the extramembraneous catalytic core and F(0) containing the membrane proton channel, linked together by a central stalk and a peripheral stalk. During catalysis, ATP synthesis in the catalytic domain of F(1) is coupled via a rotary mechanism of the central stalk subunits to proton translocation. Its function is as follows. Key component of the F(0) channel; it plays a direct role in translocation across the membrane. A homomeric c-ring of between 10-14 subunits forms the central stalk rotor element with the F(1) delta and epsilon subunits. In Rhodomonas salina (Cryptomonas salina), this protein is ATP synthase subunit c, chloroplastic.